A 533-amino-acid chain; its full sequence is Di/tripeptide-binding protein 4 (533 aa).

An N-terminal signal peptide occupies residues 1 to 25 (MLHPLLRHLPLALALALCAAGAAQA).

This sequence belongs to the bacterial solute-binding protein 5 family. In terms of assembly, the complex is composed of two ATP-binding proteins (DppD and DppF), two transmembrane proteins (DppB and DppC) and a solute-binding protein (DppA4). Five orthologous SBPs (DppA1-A5) are present in P.aeruginosa, which increases the substrate specificity of the DppBCDF transporter.

In terms of biological role, part of the ABC transporter DppABCDF involved in the uptake of various di/tripeptides. Prefers dipeptides with acidic residues at the C-terminal end. Efficiently uses tripeptides. The polypeptide is Di/tripeptide-binding protein 4 (Pseudomonas aeruginosa (strain UCBPP-PA14)).